The primary structure comprises 349 residues: Actin cytoskeleton-regulatory complex protein END3 (349 aa).

EH domains follow at residues 8–98 (EIKK…SKVN) and 130–222 (DLNQ…CNKK). In terms of domain architecture, EF-hand 1 spans 40 to 75 (LDSSVLNKIWFLADIDDDDNLDFEEFVICMRLIFDM). Positions 53, 55, 57, 59, and 64 each coordinate Ca(2+). The polyphosphoinositide (PIP2)-binding stretch occupies residues 96 to 105 (KVNLIKERKK). An EF-hand 2 domain is found at 146 to 164 (DGTITFNELSTKLSTKFFN). Positions 226-265 (YDLRSSQPPTKRKEEANEVDNLRDNGQNSSSDSSGSNVLS) are disordered. A compositionally biased stretch (basic and acidic residues) spans 236 to 248 (KRKEEANEVDNLR). Positions 249-265 (DNGQNSSSDSSGSNVLS) are enriched in low complexity. Ser276 bears the Phosphoserine mark. 2 consecutive repeat copies span residues 276 to 295 (SLTD…LLNY) and 315 to 334 (SITD…ENYL). A 2 X 20 AA approximate repeats region spans residues 276–334 (SLTDDQVANMREQLEGLLNYKKSEKTQGGSKLSKRINIRSITDDLDNIEQQVEVLENYL). Positions 307 to 349 (LSKRINIRSITDDLDNIEQQVEVLENYLNNKRHELQALQAEIN) form a coiled coil.

It belongs to the END3 family. As to quaternary structure, component of the PAN1 actin cytoskeleton-regulatory complex composed of at least END3, PAN1, and SLA1. Interacts with SCD5, SLA2 and YAP1802. Interacts directly with PAN1; the interaction with PAN1 is prevented by PAN1 phosphorylation by PKR1.

The protein resides in the cell membrane. The protein localises to the endosome membrane. Its subcellular location is the cytoplasm. It localises to the cytoskeleton. It is found in the actin patch. Component of the PAN1 actin cytoskeleton-regulatory complex required for the internalization of endosomes during actin-coupled endocytosis. The complex links the site of endocytosis to the cell membrane-associated actin cytoskeleton. Mediates uptake of external molecules and vacuolar degradation of plasma membrane proteins. Plays a role in the proper organization of the cell membrane-associated actin cytoskeleton and promotes its destabilization. END3 regulates PAN1 function by preventing phosphorylation of PAN1 by PKR1 and is also involved in the correct localization of SLA1 to the cell cortex, in the bipolar budding of diploid cells and the correct distribution of chitin at the cell surface. The polypeptide is Actin cytoskeleton-regulatory complex protein END3 (END3) (Saccharomyces cerevisiae (strain ATCC 204508 / S288c) (Baker's yeast)).